Reading from the N-terminus, the 628-residue chain is Biosynthetic arginine decarboxylase (628 aa).

Residue Lys99 is modified to N6-(pyridoxal phosphate)lysine. 279–289 (VDVGGGLGIDY) provides a ligand contact to substrate.

It belongs to the Orn/Lys/Arg decarboxylase class-II family. SpeA subfamily. It depends on Mg(2+) as a cofactor. Pyridoxal 5'-phosphate is required as a cofactor.

It catalyses the reaction L-arginine + H(+) = agmatine + CO2. Catalyzes the biosynthesis of agmatine from arginine. This Xanthomonas axonopodis pv. citri (strain 306) protein is Biosynthetic arginine decarboxylase.